The following is a 337-amino-acid chain: Diacylglycerol acyltransferase/mycolyltransferase Ag85A (337 aa).

The signal sequence occupies residues 1-42; sequence MKLVDRFRGAATGTSRRLMVGAVGAALLSGLVGFVGGSATAS. Residue 85-86 coordinates substrate; it reads MR. Residues 101 to 111 form a fibronectin-binding region; the sequence is FEWYYQSGISV. Residues C130 and C135 are joined by a disulfide bond. 2 residues coordinate substrate: S169 and D197. S169 acts as the Nucleophile in catalysis. E273 is an active-site residue. Substrate is bound by residues 275–278, K282, and 305–307; these read FVRT and HSW. The active site involves H305.

This sequence belongs to the mycobacterial A85 antigen family. In terms of assembly, homodimer.

It localises to the secreted. Its subcellular location is the cell wall. The protein resides in the cytoplasm. The catalysed reaction is an acyl-CoA + a 1,2-diacyl-sn-glycerol = a triacyl-sn-glycerol + CoA. The enzyme catalyses 2 alpha,alpha'-trehalose 6-mycolate = alpha,alpha'-trehalose 6,6'-bismycolate + alpha,alpha-trehalose. In terms of biological role, the antigen 85 proteins (FbpA, FbpB, FbpC) are responsible for the high affinity of mycobacteria for fibronectin, a large adhesive glycoprotein, which facilitates the attachment of M.tuberculosis to murine alveolar macrophages (AMs). They also help to maintain the integrity of the cell wall by catalyzing the transfer of mycolic acids to cell wall arabinogalactan, and through the synthesis of alpha,alpha-trehalose dimycolate (TDM, cord factor). They catalyze the transfer of a mycoloyl residue from one molecule of alpha,alpha-trehalose monomycolate (TMM) to another TMM, leading to the formation of TDM. FbpA mediates triacylglycerol (TAG) formation with long-chain acyl-CoA as the acyl donor and 1,2-dipalmitoyl-sn-glycerol (1,2-dipalmitin) as the acyl acceptor. It has a preference for C26:0-CoA over C18:1-CoA. This is Diacylglycerol acyltransferase/mycolyltransferase Ag85A (fbpA) from Mycobacterium ulcerans.